The following is a 588-amino-acid chain: MALNSSAFFVPCHNYNQICDLLLSSARTRSTIKGLQLHGYVVKSGLSLIPLVANNLINFYSKSQLPFDSRRAFEDSPQKSSTTWSSIISCFAQNELPWMSLEFLKKMMAGNLRPDDHVLPSATKSCAILSRCDIGRSVHCLSMKTGYDADVFVGSSLVDMYAKCGEIVYARKMFDEMPQRNVVTWSGMMYGYAQMGENEEALWLFKEALFENLAVNDYSFSSVISVCANSTLLELGRQIHGLSIKSSFDSSSFVGSSLVSLYSKCGVPEGAYQVFNEVPVKNLGIWNAMLKAYAQHSHTQKVIELFKRMKLSGMKPNFITFLNVLNACSHAGLVDEGRYYFDQMKESRIEPTDKHYASLVDMLGRAGRLQEALEVITNMPIDPTESVWGALLTSCTVHKNTELAAFAADKVFELGPVSSGMHISLSNAYAADGRFEDAAKARKLLRDRGEKKETGLSWVEERNKVHTFAAGERRHEKSKEIYEKLAELGEEMEKAGYIADTSYVLREVDGDEKNQTIRYHSERLAIAFGLITFPADRPIRVMKNLRVCGDCHNAIKFMSVCTRRVIIVRDNNRFHRFEDGKCSCNDYW.

PPR repeat units follow at residues 14-48, 49-79, 80-114, 115-149, 150-180, 181-215, 216-250, 251-281, 282-316, 317-351, and 352-386; these read NYNQICDLLLSSARTRSTIKGLQLHGYVVKSGLSL, IPLVANNLINFYSKSQLPFDSRRAFEDSPQK, SSTTWSSIISCFAQNELPWMSLEFLKKMMAGNLRP, DDHVLPSATKSCAILSRCDIGRSVHCLSMKTGYDA, DVFVGSSLVDMYAKCGEIVYARKMFDEMPQR, NVVTWSGMMYGYAQMGENEEALWLFKEALFENLAV, NDYSFSSVISVCANSTLLELGRQIHGLSIKSSFDS, SSFVGSSLVSLYSKCGVPEGAYQVFNEVPVK, NLGIWNAMLKAYAQHSHTQKVIELFKRMKLSGMKP, NFITFLNVLNACSHAGLVDEGRYYFDQMKESRIEP, and TDKHYASLVDMLGRAGRLQEALEVITNMPIDPTES. The segment at 387-462 is type E motif; that stretch reads VWGALLTSCT…ETGLSWVEER (76 aa). A type E(+) motif region spans residues 463–493; sequence NKVHTFAAGERRHEKSKEIYEKLAELGEEME. Residues 494 to 588 form a type DYW motif region; that stretch reads KAGYIADTSY…DGKCSCNDYW (95 aa).

This sequence belongs to the PPR family. PCMP-H subfamily.

This is Putative pentatricopeptide repeat-containing protein At5g52630 (PCMP-H52) from Arabidopsis thaliana (Mouse-ear cress).